The chain runs to 340 residues: DNA-directed RNA polymerase subunit alpha (340 aa).

The interval 1–236 (MLSLSKNWNT…EQLQLFISFE (236 aa)) is alpha N-terminal domain (alpha-NTD). The interval 251–340 (FAPYLLKRVD…LSKRYEDSYN (90 aa)) is alpha C-terminal domain (alpha-CTD).

This sequence belongs to the RNA polymerase alpha chain family. Homodimer. The RNAP catalytic core consists of 2 alpha, 1 beta, 1 beta' and 1 omega subunit. When a sigma factor is associated with the core the holoenzyme is formed, which can initiate transcription.

The enzyme catalyses RNA(n) + a ribonucleoside 5'-triphosphate = RNA(n+1) + diphosphate. Its function is as follows. DNA-dependent RNA polymerase catalyzes the transcription of DNA into RNA using the four ribonucleoside triphosphates as substrates. The protein is DNA-directed RNA polymerase subunit alpha of Rickettsia peacockii (strain Rustic).